Here is a 54-residue protein sequence, read N- to C-terminus: UPF0391 membrane protein BAV1230 (54 aa).

2 helical membrane passes run 5–25 and 27–47; these read AAVFFVIALIAAVLGFGGIAA and AAGIAKILFFVFLVLALLSVL.

Belongs to the UPF0391 family.

The protein resides in the cell membrane. The protein is UPF0391 membrane protein BAV1230 of Bordetella avium (strain 197N).